The sequence spans 607 residues: Elongation factor 4 (607 aa).

One can recognise a tr-type G domain in the interval 11–193; that stretch reads ENIRNFSIIA…KIVEVVPPPE (183 aa). Residues 23–28 and 140–143 each bind GTP; these read DHGKST and NKID.

The protein belongs to the TRAFAC class translation factor GTPase superfamily. Classic translation factor GTPase family. LepA subfamily.

The protein resides in the cell membrane. The catalysed reaction is GTP + H2O = GDP + phosphate + H(+). Required for accurate and efficient protein synthesis under certain stress conditions. May act as a fidelity factor of the translation reaction, by catalyzing a one-codon backward translocation of tRNAs on improperly translocated ribosomes. Back-translocation proceeds from a post-translocation (POST) complex to a pre-translocation (PRE) complex, thus giving elongation factor G a second chance to translocate the tRNAs correctly. Binds to ribosomes in a GTP-dependent manner. This Staphylococcus haemolyticus (strain JCSC1435) protein is Elongation factor 4.